Consider the following 307-residue polypeptide: Ornithine carbamoyltransferase (307 aa).

Carbamoyl phosphate is bound by residues 56-59 (STRT), Gln83, Arg107, and 134-137 (HPCQ). Residues Asn165, Asp223, and 227–228 (SM) each bind L-ornithine. Residues 263 to 264 (CL) and Arg291 each bind carbamoyl phosphate.

This sequence belongs to the aspartate/ornithine carbamoyltransferase superfamily. OTCase family.

Its subcellular location is the cytoplasm. It carries out the reaction carbamoyl phosphate + L-ornithine = L-citrulline + phosphate + H(+). The protein operates within amino-acid biosynthesis; L-arginine biosynthesis; L-arginine from L-ornithine and carbamoyl phosphate: step 1/3. Functionally, reversibly catalyzes the transfer of the carbamoyl group from carbamoyl phosphate (CP) to the N(epsilon) atom of ornithine (ORN) to produce L-citrulline. The protein is Ornithine carbamoyltransferase of Cupriavidus pinatubonensis (strain JMP 134 / LMG 1197) (Cupriavidus necator (strain JMP 134)).